A 350-amino-acid polypeptide reads, in one-letter code: tRNA-splicing endonuclease (350 aa).

Residues Y286, H297, and K328 contribute to the active site.

It belongs to the tRNA-intron endonuclease family. Archaeal long subfamily. As to quaternary structure, homodimer.

The catalysed reaction is pretRNA = a 3'-half-tRNA molecule with a 5'-OH end + a 5'-half-tRNA molecule with a 2',3'-cyclic phosphate end + an intron with a 2',3'-cyclic phosphate and a 5'-hydroxyl terminus.. Its function is as follows. Endonuclease that removes tRNA introns. Cleaves pre-tRNA at the 5'- and 3'-splice sites to release the intron. The products are an intron and two tRNA half-molecules bearing 2',3' cyclic phosphate and 5'-OH termini. Recognizes a pseudosymmetric substrate in which 2 bulged loops of 3 bases are separated by a stem of 4 bp. The protein is tRNA-splicing endonuclease of Methanosarcina acetivorans (strain ATCC 35395 / DSM 2834 / JCM 12185 / C2A).